We begin with the raw amino-acid sequence, 322 residues long: Arginase-1 (322 aa).

The segment covering 1 to 12 (MSSKSKSIGIIG) has biased composition (low complexity). Residues 1–26 (MSSKSKSIGIIGAPFSKGQPRGGVEE) are disordered. Position 7 is a phosphoserine (S7). Position 17 is an N6-succinyllysine (K17). S62 is modified (phosphoserine). H101, D124, H126, and D128 together coordinate Mn(2+). Residues 126–130 (HTDIN) and 137–139 (SGN) contribute to the substrate site. At S163 the chain carries Phosphoserine. A substrate-binding site is contributed by D183. D232 and D234 together coordinate Mn(2+). Positions 246 and 277 each coordinate substrate.

The protein belongs to the arginase family. Homotrimer. Interacts with CMTM6. The cofactor is Mn(2+).

It localises to the cytoplasm. The catalysed reaction is L-arginine + H2O = urea + L-ornithine. It participates in nitrogen metabolism; urea cycle; L-ornithine and urea from L-arginine: step 1/1. This Oryctolagus cuniculus (Rabbit) protein is Arginase-1 (ARG1).